The sequence spans 635 residues: Threonine--tRNA ligase (635 aa).

A TGS domain is found at 1–61 (MIKITLKDGK…HKDSSLEILT (61 aa)). The interval 242–532 (DHRKLGKELD…LIEQYAGAFP (291 aa)) is catalytic. The Zn(2+) site is built by Cys333, His384, and His509.

It belongs to the class-II aminoacyl-tRNA synthetase family. Homodimer. Requires Zn(2+) as cofactor.

It is found in the cytoplasm. It catalyses the reaction tRNA(Thr) + L-threonine + ATP = L-threonyl-tRNA(Thr) + AMP + diphosphate + H(+). Functionally, catalyzes the attachment of threonine to tRNA(Thr) in a two-step reaction: L-threonine is first activated by ATP to form Thr-AMP and then transferred to the acceptor end of tRNA(Thr). Also edits incorrectly charged L-seryl-tRNA(Thr). The protein is Threonine--tRNA ligase of Clostridium botulinum (strain Kyoto / Type A2).